A 190-amino-acid chain; its full sequence is 3-isopropylmalate dehydratase small subunit (190 aa).

It belongs to the LeuD family. LeuD type 1 subfamily. Heterodimer of LeuC and LeuD.

The enzyme catalyses (2R,3S)-3-isopropylmalate = (2S)-2-isopropylmalate. It participates in amino-acid biosynthesis; L-leucine biosynthesis; L-leucine from 3-methyl-2-oxobutanoate: step 2/4. In terms of biological role, catalyzes the isomerization between 2-isopropylmalate and 3-isopropylmalate, via the formation of 2-isopropylmaleate. This is 3-isopropylmalate dehydratase small subunit from Staphylococcus aureus (strain JH1).